The chain runs to 623 residues: MGDLPGSGSTAQPRDAAVTGTGGNSTAGGGSSVGSTAVDRPPSPARLSHTSEKHPKVTLTELNMLRRHRELCDVVLNVGGRKIFAHRVILSACSSYFCAMFTGELEESRQTEVTIRDIDENAMELLIDFCYTAHIMVEESNVQTLLPAACLLQLVEIQDICCEFLKRQLDPTNCLGIRAFADTHSCRELLRIADKFTQHNFQEVMESEEFLLLPVGQLVDIICSDELNVRSEEQVFNAVMSWLKYNVAERRQHLAQVLQHVRLPLLSPKFLVGTVGSDLLVRSDEACRDLVDEAKNYLLLPQERPLMQGPRTRPRKPTRRGEVLFAVGGWCSGDAIASVERFDPQTNDWKMVAPMSKRRCGVGVAVLNDLLYAVGGHDGQSYLNSIERYDPQTNQWSCDVAPTTSCRTSVGVAVLDGFLYAVGGQDGVQCLNHVERYDPKENKWSKVAPMTTRRLGVAVAVLGGFLYAIGGSDGQCPLNTVERYDPRHNKWVAVSPMSTRRKHLGCAVFNNYIYAVGGRDDCMELSSAERYNPLTNTWSPIVAMTSRRSGVGLAVVNGQLYAVGGFDGSAYLKTIEVYDPETNQWRLCGCMNYRRLGGGVGVMRAPQTENYMWCENSFKQPNS.

A disordered region spans residues 1 to 54; that stretch reads MGDLPGSGSTAQPRDAAVTGTGGNSTAGGGSSVGSTAVDRPPSPARLSHTSEKH. Phosphothreonine is present on T19. Gly residues predominate over residues 20–32; the sequence is GTGGNSTAGGGSS. In terms of domain architecture, BTB spans 72–139; it reads CDVVLNVGGR…CYTAHIMVEE (68 aa). The 103-residue stretch at 174 to 276 folds into the BACK domain; the sequence is CLGIRAFADT…SPKFLVGTVG (103 aa). Kelch repeat units follow at residues 323 to 369, 371 to 417, 418 to 464, 466 to 511, 513 to 558, and 559 to 605; these read VLFA…VLND, LYAV…VLDG, FLYA…VLGG, LYAI…VFNN, IYAV…VVNG, and QLYA…VMRA.

Its pathway is protein modification; protein ubiquitination. Probable substrate-specific adapter of an E3 ubiquitin-protein ligase complex which mediates the ubiquitination and subsequent proteasomal degradation of target proteins. May have a role in synapse differentiation and growth. The sequence is that of Kelch-like protein diablo from Drosophila erecta (Fruit fly).